Consider the following 381-residue polypeptide: Creatine kinase M-type (381 aa).

One can recognise a Phosphagen kinase N-terminal domain in the interval 11–98 (KLNYSAAEEF…FDPVIEDRHG (88 aa)). Positions 125-367 (YVLSSRVRTG…KLMVEMEKRL (243 aa)) constitute a Phosphagen kinase C-terminal domain. ATP-binding positions include 128 to 132 (SSRVR), His191, Arg236, Arg292, 320 to 325 (RGTGGV), and Asp335.

Belongs to the ATP:guanido phosphotransferase family. As to quaternary structure, dimer of identical or non-identical chains. With MM being the major form in skeletal muscle and myocardium, MB existing in myocardium, and BB existing in many tissues, especially brain.

Its subcellular location is the cytoplasm. The catalysed reaction is creatine + ATP = N-phosphocreatine + ADP + H(+). Functionally, reversibly catalyzes the transfer of phosphate between ATP and various phosphogens (e.g. creatine phosphate). Creatine kinase isoenzymes play a central role in energy transduction in tissues with large, fluctuating energy demands, such as skeletal muscle, heart, brain and spermatozoa. In Tetronarce californica (Pacific electric ray), this protein is Creatine kinase M-type.